The sequence spans 309 residues: MKKDFLSILDIGEYELESIVADAVRLKRLKSAGTAHEFLRGKSLGMIFEKASTRTRVSFEVGMSDLGGHALFLNPQDMQLGRGEEIRDTARVLARYVDAVMIRAYSHAAIEEFARYANVPVVNGLSDRLHPCQVLADIMTLSERFGDLHGLKLAWVGDGNNVCNSWLLSSALTGMEIAVASPPRYRPRDEIVDQARAAGGKVTVVTDPDEAVRDADVLYTDIWVSMGDEQERAERLQALKGYTIDSRLLAQASPDALVMHCLPAHRGEEITDEVMEGPQSIVWDQAENRLHAQKALLVRLIAGGMASVD.

Carbamoyl phosphate is bound by residues 52–55, glutamine 79, arginine 103, and 130–133; these read STRT and HPCQ. L-ornithine contacts are provided by residues asparagine 161, aspartate 221, and 225-226; that span reads SM. Residues 261–262 and arginine 289 contribute to the carbamoyl phosphate site; that span reads CL.

The protein belongs to the aspartate/ornithine carbamoyltransferase superfamily. OTCase family.

Its subcellular location is the cytoplasm. It carries out the reaction carbamoyl phosphate + L-ornithine = L-citrulline + phosphate + H(+). Its pathway is amino-acid biosynthesis; L-arginine biosynthesis; L-arginine from L-ornithine and carbamoyl phosphate: step 1/3. Functionally, reversibly catalyzes the transfer of the carbamoyl group from carbamoyl phosphate (CP) to the N(epsilon) atom of ornithine (ORN) to produce L-citrulline. This Methanoculleus marisnigri (strain ATCC 35101 / DSM 1498 / JR1) protein is Ornithine carbamoyltransferase.